The primary structure comprises 468 residues: UDP-glucosyl transferase 74CD1 (468 aa).

A UDP-alpha-D-glucose-binding site is contributed by G20. The active-site Proton acceptor is the H21. Residue D114 is the Charge relay of the active site. Residues S292, W344, Q347, H362, W365, N366, S367, E370, D386, and Q387 each coordinate UDP-alpha-D-glucose.

Belongs to the UDP-glycosyltransferase family. Mainly expressed in flowers, flower buds and young leaves, and, to a lesser extent, in old leaves, stems and roots.

It participates in secondary metabolite biosynthesis; terpenoid biosynthesis. In terms of biological role, component of the oleanane-type triterpene saponins (e.g. saponarioside A and saponarioside B) biosynthetic pathway, leading to the production of natural products with detergent properties used as traditional sources of soap. A glycosyltransferase that, together with SDR1, mediates the conversion of QA-tri to QA-triF; UGT74CD1 may transfer 4-keto-6-deoxy-glucose to QA-tri, which is in turn reduced to D-fucose by SDR1, thus leading to QA-triF formation via the initiation of the C-28 sugar chain. This chain is UDP-glucosyl transferase 74CD1, found in Saponaria officinalis (Common soapwort).